Here is a 190-residue protein sequence, read N- to C-terminus: Imidazole glycerol phosphate synthase subunit HisH (190 aa).

The 189-residue stretch at 2–190 (IVGVVDYTVG…IKRFLAVAKR (189 aa)) folds into the Glutamine amidotransferase type-1 domain. C73 acts as the Nucleophile in catalysis. Active-site residues include H169 and E171.

In terms of assembly, heterodimer of HisH and HisF.

The protein localises to the cytoplasm. It catalyses the reaction 5-[(5-phospho-1-deoxy-D-ribulos-1-ylimino)methylamino]-1-(5-phospho-beta-D-ribosyl)imidazole-4-carboxamide + L-glutamine = D-erythro-1-(imidazol-4-yl)glycerol 3-phosphate + 5-amino-1-(5-phospho-beta-D-ribosyl)imidazole-4-carboxamide + L-glutamate + H(+). It carries out the reaction L-glutamine + H2O = L-glutamate + NH4(+). The protein operates within amino-acid biosynthesis; L-histidine biosynthesis; L-histidine from 5-phospho-alpha-D-ribose 1-diphosphate: step 5/9. Functionally, IGPS catalyzes the conversion of PRFAR and glutamine to IGP, AICAR and glutamate. The HisH subunit catalyzes the hydrolysis of glutamine to glutamate and ammonia as part of the synthesis of IGP and AICAR. The resulting ammonia molecule is channeled to the active site of HisF. The protein is Imidazole glycerol phosphate synthase subunit HisH of Pyrobaculum aerophilum (strain ATCC 51768 / DSM 7523 / JCM 9630 / CIP 104966 / NBRC 100827 / IM2).